Consider the following 325-residue polypeptide: Elongation factor P--(R)-beta-lysine ligase (325 aa).

A substrate-binding site is contributed by 76-78; it reads SPE. ATP contacts are provided by residues 100–102 and asparagine 109; that span reads RNE. Tyrosine 118 is a substrate binding site. 244-245 is a binding site for ATP; the sequence is EL. Glutamate 251 provides a ligand contact to substrate. Glycine 300 contacts ATP.

This sequence belongs to the class-II aminoacyl-tRNA synthetase family. EpmA subfamily. Homodimer.

The catalysed reaction is D-beta-lysine + L-lysyl-[protein] + ATP = N(6)-((3R)-3,6-diaminohexanoyl)-L-lysyl-[protein] + AMP + diphosphate + H(+). Its function is as follows. With EpmB is involved in the beta-lysylation step of the post-translational modification of translation elongation factor P (EF-P). Catalyzes the ATP-dependent activation of (R)-beta-lysine produced by EpmB, forming a lysyl-adenylate, from which the beta-lysyl moiety is then transferred to the epsilon-amino group of a conserved specific lysine residue in EF-P. The protein is Elongation factor P--(R)-beta-lysine ligase of Klebsiella pneumoniae (strain 342).